Consider the following 160-residue polypeptide: Ureidoglycolate lyase (160 aa).

This sequence belongs to the ureidoglycolate lyase family. As to quaternary structure, homodimer. Ni(2+) is required as a cofactor.

It carries out the reaction (S)-ureidoglycolate = urea + glyoxylate. The protein operates within nitrogen metabolism; (S)-allantoin degradation. Catalyzes the catabolism of the allantoin degradation intermediate (S)-ureidoglycolate, generating urea and glyoxylate. Involved in the anaerobic utilization of allantoin as sole nitrogen source. Reinforces the induction of genes involved in the degradation of allantoin and glyoxylate by producing glyoxylate. The polypeptide is Ureidoglycolate lyase (Shigella flexneri serotype 5b (strain 8401)).